The sequence spans 303 residues: MATH domain and coiled-coil domain-containing protein At3g58250 (303 aa).

The MATH domain occupies 8–135 (KKKFSWVIKN…KGELKIVVEI (128 aa)). The stretch at 231–287 (KLDWLKKKLDQVTQKKEKEAAGETRMHEIGEELKDLKLKCSDLEAQLDKEKADVLAA) forms a coiled coil.

This is MATH domain and coiled-coil domain-containing protein At3g58250 from Arabidopsis thaliana (Mouse-ear cress).